The chain runs to 868 residues: mRNA-capping enzyme (868 aa).

The active-site N6-GMP-lysine intermediate is K282. Residues 594–868 form the mRNA cap 0 methyltransferase domain; sequence GIYRAQTALI…LFGFICLRKN (275 aa). S-adenosyl-L-methionine is bound by residues K607, G624, D646, and 710 to 712; that span reads LFI.

This sequence in the N-terminal section; belongs to the dsDNA virus mRNA guanylyltransferase family. The protein in the C-terminal section; belongs to the class I-like SAM-binding methyltransferase superfamily. mRNA cap 0 methyltransferase family. As to quaternary structure, part of the viral DNA-directed RNA polymerase that consists of 8 polII-like subunits (RPB1, RPB2, RPB3, RPB5, RPB6, RPB7, RPB9, RPB10), a capping enzyme and a termination factor.

It is found in the virion. It carries out the reaction a 5'-end triphospho-ribonucleoside in mRNA + H2O = a 5'-end diphospho-ribonucleoside in mRNA + phosphate + H(+). It catalyses the reaction a 5'-end diphospho-ribonucleoside in mRNA + GTP + H(+) = a 5'-end (5'-triphosphoguanosine)-ribonucleoside in mRNA + diphosphate. The catalysed reaction is a 5'-end (5'-triphosphoguanosine)-ribonucleoside in mRNA + S-adenosyl-L-methionine = a 5'-end (N(7)-methyl 5'-triphosphoguanosine)-ribonucleoside in mRNA + S-adenosyl-L-homocysteine. The protein operates within mRNA processing; mRNA capping. Probably catalyzes the second reaction in the mRNA cap formation pathway. Forms a covalent complex with GTP. In Ornithodoros (relapsing fever ticks), this protein is mRNA-capping enzyme.